We begin with the raw amino-acid sequence, 161 residues long: 3-isopropylmalate dehydratase small subunit (161 aa).

Belongs to the LeuD family. LeuD type 2 subfamily. As to quaternary structure, heterodimer of LeuC and LeuD.

The catalysed reaction is (2R,3S)-3-isopropylmalate = (2S)-2-isopropylmalate. It participates in amino-acid biosynthesis; L-leucine biosynthesis; L-leucine from 3-methyl-2-oxobutanoate: step 2/4. Functionally, catalyzes the isomerization between 2-isopropylmalate and 3-isopropylmalate, via the formation of 2-isopropylmaleate. The sequence is that of 3-isopropylmalate dehydratase small subunit from Clostridium botulinum (strain Eklund 17B / Type B).